We begin with the raw amino-acid sequence, 171 residues long: Co-chaperone protein HscB homolog (171 aa).

A J domain is found at 2–74; the sequence is NHFELFGLPS…ISRAEYILAE (73 aa).

The protein belongs to the HscB family. In terms of assembly, interacts with HscA and stimulates its ATPase activity.

Co-chaperone involved in the maturation of iron-sulfur cluster-containing proteins. Seems to help targeting proteins to be folded toward HscA. The protein is Co-chaperone protein HscB homolog of Vibrio parahaemolyticus serotype O3:K6 (strain RIMD 2210633).